A 451-amino-acid polypeptide reads, in one-letter code: Phosphoglucosamine mutase (451 aa).

Ser107 (phosphoserine intermediate) is an active-site residue. Residues Ser107, Asp246, Asp248, and Asp250 each contribute to the Mg(2+) site. Residue Ser107 is modified to Phosphoserine.

This sequence belongs to the phosphohexose mutase family. Requires Mg(2+) as cofactor. Activated by phosphorylation.

The enzyme catalyses alpha-D-glucosamine 1-phosphate = D-glucosamine 6-phosphate. Its function is as follows. Catalyzes the conversion of glucosamine-6-phosphate to glucosamine-1-phosphate. The chain is Phosphoglucosamine mutase from Burkholderia ambifaria (strain ATCC BAA-244 / DSM 16087 / CCUG 44356 / LMG 19182 / AMMD) (Burkholderia cepacia (strain AMMD)).